A 479-amino-acid polypeptide reads, in one-letter code: MKALNKETAPKVQRPERIIQFGEGNFLRAFVDWIIYNMNQKTDFNSSVVVVQPIDKGMVDMLNAQDDLYHVNLQGLDKGEVVNSLTMIDVISRALNPYTQNDEFMKLAEQPEMRFVISNTTEAGIAFDPTCKLEDAPASSYPGKLTQLLYHRFKTFNGDKTKGLIIFPCELIFLNGHKLKETIYQYIDLWNLGNEFKTWFEEACGVYATLVDRIVPGFPRKDIAAIKEKIQYDDNLVVQAEIFHLWVIEAPQEVAKEFPADKAGLNVLFVPSEAPYHERKVTLLNGPHTVLSPVAYLSGVNIVRDACQHEVIGKYIHKVMFDELMETLNLPKEELKKFAEDVLERFNNPFVDHAVTSIMLNSFPKYETRDLPGLKTYLERKGELPKGLVLGLAAIITYYKGGVRADGAEIVPNDAPEIMNLLKELWATGCTKKVTEGVLAAEFIWGEDLNKIPGLAAAVKADLDSIQEKGMLETVKGIL.

An NAD(+)-binding site is contributed by 18–29 (IIQFGEGNFLRA).

Belongs to the mannitol dehydrogenase family. UxaB subfamily.

The catalysed reaction is D-altronate + NAD(+) = keto-D-tagaturonate + NADH + H(+). It participates in carbohydrate metabolism; pentose and glucuronate interconversion. In Bacteroides thetaiotaomicron (strain ATCC 29148 / DSM 2079 / JCM 5827 / CCUG 10774 / NCTC 10582 / VPI-5482 / E50), this protein is Altronate oxidoreductase.